Consider the following 591-residue polypeptide: V-type ATP synthase alpha chain (591 aa).

ATP is bound at residue 242-249 (GPFGAGKT).

The protein belongs to the ATPase alpha/beta chains family.

The catalysed reaction is ATP + H2O + 4 H(+)(in) = ADP + phosphate + 5 H(+)(out). Produces ATP from ADP in the presence of a proton gradient across the membrane. The V-type alpha chain is a catalytic subunit. This chain is V-type ATP synthase alpha chain (atpA), found in Chlamydia muridarum (strain MoPn / Nigg).